A 904-amino-acid chain; its full sequence is DNA mismatch repair protein MutS (904 aa).

654–661 (GPNMAGKS) provides a ligand contact to ATP.

This sequence belongs to the DNA mismatch repair MutS family.

This protein is involved in the repair of mismatches in DNA. It is possible that it carries out the mismatch recognition step. This protein has a weak ATPase activity. The chain is DNA mismatch repair protein MutS from Caulobacter sp. (strain K31).